The following is a 130-amino-acid chain: Protein YchQ (130 aa).

Residues 1 to 9 (MTSFSTLLS) are Periplasmic-facing. Residues 10–28 (VHLISIALSVGLLTLRFWL) traverse the membrane as a helical segment. The Cytoplasmic portion of the chain corresponds to 29 to 39 (RYQKHPQAFAR). Residues 40 to 59 (WTRIVPPVVDTLLLLSGIAL) traverse the membrane as a helical segment. At 60-73 (MAKAHILPFSGQAQ) the chain is on the periplasmic side. A helical membrane pass occupies residues 74-93 (WLTEKLFGVIIYIVLGFIAL). Over 94-104 (DYRRMHSQQAR) the chain is Cytoplasmic. Residues 105–124 (IIAFPLALVVLYIIIKLATT) form a helical membrane-spanning segment. The Periplasmic portion of the chain corresponds to 125 to 130 (KVPLLG).

It belongs to the SirB2 family.

The protein resides in the cell inner membrane. This Escherichia coli (strain K12) protein is Protein YchQ (ychQ).